The following is a 183-amino-acid chain: Inner membrane protein p54 (183 aa).

Residues 32-52 (YTILIAIVVLVIIIIVLIYLF) form a helical membrane-spanning segment. Residues 81-157 (EVTPQPGTSK…PYTTVTTQNT (77 aa)) are disordered. The span at 111-122 (RPATNKPVTDNP) shows a compositional bias: polar residues. The span at 130–143 (ATGGPAAAPAAASA) shows a compositional bias: low complexity. Residues 149–161 (YTTVTTQNTASQT) are interaction with host DYNLL1.

Belongs to the asfivirus envelope protein p54 family. In terms of assembly, interacts with the host light chain cytoplasmic dynein DYNLL1; this interaction is critical for intracellular microtubule-dependent virus transport toward viral factories.

The protein localises to the virion membrane. It localises to the host cytoplasm. The protein resides in the host cytoskeleton. Its subcellular location is the host endoplasmic reticulum membrane. Its function is as follows. Inner envelope protein involved, through its interaction with host dynein, in the intracellular microtubule-dependent transport of viral capsid toward viral factories. Seems to induce caspase-3 activation and apoptosis. Plays a role in virion morphogenesis by recruiting and transforming the host ER membranes into the precursors of the viral envelope. Involved in virus attachment to the host cell. The chain is Inner membrane protein p54 from African swine fever virus (strain Badajoz 1971 Vero-adapted) (Ba71V).